The following is a 148-amino-acid chain: Large ribosomal subunit protein bL9 (148 aa).

Belongs to the bacterial ribosomal protein bL9 family.

Its function is as follows. Binds to the 23S rRNA. The polypeptide is Large ribosomal subunit protein bL9 (Listeria monocytogenes serotype 4b (strain CLIP80459)).